A 356-amino-acid polypeptide reads, in one-letter code: S-adenosylmethionine:tRNA ribosyltransferase-isomerase (356 aa).

The protein belongs to the QueA family. Monomer.

The protein resides in the cytoplasm. The enzyme catalyses 7-aminomethyl-7-carbaguanosine(34) in tRNA + S-adenosyl-L-methionine = epoxyqueuosine(34) in tRNA + adenine + L-methionine + 2 H(+). Its pathway is tRNA modification; tRNA-queuosine biosynthesis. Functionally, transfers and isomerizes the ribose moiety from AdoMet to the 7-aminomethyl group of 7-deazaguanine (preQ1-tRNA) to give epoxyqueuosine (oQ-tRNA). The sequence is that of S-adenosylmethionine:tRNA ribosyltransferase-isomerase from Ralstonia nicotianae (strain ATCC BAA-1114 / GMI1000) (Ralstonia solanacearum).